The primary structure comprises 389 residues: Protein IQ-domain 26 (389 aa).

IQ domains lie at 106–134 (ERWA…GLVK) and 135–157 (LQAL…SMQA). Residues 137–151 (ALVRGYLVRKRAAET) form a calmodulin-binding region. The segment at 347–374 (SVSGVRMVQPQPQPQTQTQQQKRSPCSY) is disordered.

This sequence belongs to the IQD family. As to quaternary structure, binds to multiple calmodulin (CaM) in the presence of Ca(2+) and CaM-like proteins.

The protein resides in the cell membrane. It localises to the cytoplasm. The protein localises to the cytoskeleton. Functionally, may be involved in cooperative interactions with calmodulins or calmodulin-like proteins. Recruits calmodulin proteins to microtubules, thus being a potential scaffold in cellular signaling and trafficking. May associate with nucleic acids and regulate gene expression at the transcriptional or post-transcriptional level. The chain is Protein IQ-domain 26 from Arabidopsis thaliana (Mouse-ear cress).